The primary structure comprises 383 residues: Spermidine/putrescine import ATP-binding protein PotA (383 aa).

Residues 12-246 form the ABC transporter domain; sequence IALRDISKVY…PSTPFVAGFI (235 aa). 48–55 is a binding site for ATP; it reads GPSGCGKT.

It belongs to the ABC transporter superfamily. Spermidine/putrescine importer (TC 3.A.1.11.1) family. The complex is composed of two ATP-binding proteins (PotA), two transmembrane proteins (PotB and PotC) and a solute-binding protein (PotD).

Its subcellular location is the cell membrane. The catalysed reaction is ATP + H2O + polyamine-[polyamine-binding protein]Side 1 = ADP + phosphate + polyamineSide 2 + [polyamine-binding protein]Side 1.. Functionally, part of the ABC transporter complex PotABCD involved in spermidine/putrescine import. Responsible for energy coupling to the transport system. The protein is Spermidine/putrescine import ATP-binding protein PotA of Acidothermus cellulolyticus (strain ATCC 43068 / DSM 8971 / 11B).